A 276-amino-acid chain; its full sequence is HUWE1-associated protein modifying stress responses 2 (276 aa).

3 disordered regions span residues 146 to 182 (GKVP…TPVG), 204 to 238 (ISMR…PNSL), and 252 to 276 (VRKR…NRMV). Pro residues predominate over residues 149-165 (PPTPQPPRTPRMSPRPP). 2 stretches are compositionally biased toward low complexity: residues 166-179 (AAAS…ESGT) and 208-219 (SGPPGSSSQDGG). The segment at 252-276 (VRKRTSAQFGDGSADSPLHKRNRMV) is nuclear localization signal.

It belongs to the HAPSTR1 family. Homooligomer. Heterooligomer with HAPSTR1; the interaction is direct and stabilizes HAPSTR1 independently of HUWE1. Interacts with HUWE1.

It is found in the nucleus. In terms of biological role, together with HAPSTR1 plays a central regulatory role in the cellular response to molecular stressors, such as DNA damage, nutrient scarcity, and protein misfolding. Regulates these multiple stress response signaling pathways by stabilizing HAPSTR1, but also independently of HAPSTR1. The polypeptide is HUWE1-associated protein modifying stress responses 2 (Mus musculus (Mouse)).